A 44-amino-acid polypeptide reads, in one-letter code: Photosystem I reaction center subunit IX (44 aa).

The helical transmembrane segment at tyrosine 7–isoleucine 27 threads the bilayer.

Belongs to the PsaJ family.

Its subcellular location is the plastid membrane. May help in the organization of the PsaE and PsaF subunits. The protein is Photosystem I reaction center subunit IX of Cuscuta obtusiflora (Peruvian dodder).